Reading from the N-terminus, the 329-residue chain is Mitochondrial substrate carrier family protein Q (329 aa).

Solcar repeat units follow at residues 18–115, 125–206, and 216–310; these read VEAL…LKSI, LGTI…LRAL, and LGGL…VVIH. 6 helical membrane-spanning segments follow: residues 21–41, 95–115, 131–151, 175–195, 221–241, and 298–318; these read LGHA…TYPF, LIGI…LKSI, LAIA…IWVV, GFGG…NPSV, VFIL…PYLL, and AFMF…LFYL.

This sequence belongs to the mitochondrial carrier (TC 2.A.29) family.

It localises to the peroxisome membrane. Its function is as follows. May have transport activity. This is Mitochondrial substrate carrier family protein Q (mcfQ) from Dictyostelium discoideum (Social amoeba).